We begin with the raw amino-acid sequence, 180 residues long: Signal peptidase complex subunit 3 (180 aa).

Over 1–11 (MNTVLSRANSL) the chain is Cytoplasmic. A helical; Signal-anchor for type II membrane protein membrane pass occupies residues 12 to 32 (FAFSLSVMAALTFGCFITTAF). Residues 33 to 180 (KERSVPVSIA…PDTYETTKSY (148 aa)) are Lumenal-facing. Asparagine 141 carries N-linked (GlcNAc...) asparagine glycosylation.

It belongs to the SPCS3 family. Component of the signal peptidase complex paralog A (SPC-A) composed of a catalytic subunit SEC11A and three accessory subunits SPCS1, SPCS2 and SPCS3. Component of the signal peptidase complex paralog C (SPC-C) composed of a catalytic subunit SEC11C and three accessory subunits SPCS1, SPCS2 and SPCS3. The complex induces a local thinning of the ER membrane which is used to measure the length of the signal peptide (SP) h-region of protein substrates. This ensures the selectivity of the complex towards h-regions shorter than 18-20 amino acids. In terms of tissue distribution, expressed in hen oviduct (at protein level).

Its subcellular location is the endoplasmic reticulum membrane. In terms of biological role, essential component of the signal peptidase complex (SPC) which catalyzes the cleavage of N-terminal signal sequences from nascent proteins as they are translocated into the lumen of the endoplasmic reticulum. Essential for the SPC catalytic activity, possibly by stabilizing and positioning the active center of the complex close to the lumenal surface. The protein is Signal peptidase complex subunit 3 of Gallus gallus (Chicken).